A 102-amino-acid chain; its full sequence is Cytochrome c (102 aa).

The residue at position 1 (Gly1) is an N-acetylglycine. Over residues 1–11 (GDAERGKKLFE) the composition is skewed to basic and acidic residues. Positions 1–26 (GDAERGKKLFESRAGQCHSSQKGVNS) are disordered. Heme c contacts are provided by Cys17, His18, and Met79. The segment covering 17-26 (CHSSQKGVNS) has biased composition (polar residues). At Lys85 the chain carries N6,N6,N6-trimethyllysine.

It belongs to the cytochrome c family. Post-translationally, binds 1 heme c group covalently per subunit.

It localises to the mitochondrion intermembrane space. Electron carrier protein. The oxidized form of the cytochrome c heme group can accept an electron from the heme group of the cytochrome c1 subunit of cytochrome reductase. Cytochrome c then transfers this electron to the cytochrome oxidase complex, the final protein carrier in the mitochondrial electron-transport chain. This chain is Cytochrome c, found in Euglena viridis (Cercaria viridis).